Consider the following 273-residue polypeptide: 2,3,4,5-tetrahydropyridine-2,6-dicarboxylate N-succinyltransferase (273 aa).

Arginine 104 and aspartate 141 together coordinate substrate.

Belongs to the transferase hexapeptide repeat family. Homotrimer.

The protein localises to the cytoplasm. The catalysed reaction is (S)-2,3,4,5-tetrahydrodipicolinate + succinyl-CoA + H2O = (S)-2-succinylamino-6-oxoheptanedioate + CoA. Its pathway is amino-acid biosynthesis; L-lysine biosynthesis via DAP pathway; LL-2,6-diaminopimelate from (S)-tetrahydrodipicolinate (succinylase route): step 1/3. The polypeptide is 2,3,4,5-tetrahydropyridine-2,6-dicarboxylate N-succinyltransferase (Buchnera aphidicola subsp. Schizaphis graminum (strain Sg)).